Reading from the N-terminus, the 81-residue chain is Photosystem I iron-sulfur center (81 aa).

2 4Fe-4S ferredoxin-type domains span residues 2–31 and 39–68; these read AHSVKVYDTCIGCTQCVRACPCDVLEMVPW and IASAPRTEDCIGCKRCETACPTDFLSVRVY. [4Fe-4S] cluster-binding residues include Cys-11, Cys-14, Cys-17, Cys-21, Cys-48, Cys-51, Cys-54, and Cys-58.

The eukaryotic PSI reaction center is composed of at least 11 subunits. Requires [4Fe-4S] cluster as cofactor.

It is found in the plastid. The protein localises to the chloroplast thylakoid membrane. It carries out the reaction reduced [plastocyanin] + hnu + oxidized [2Fe-2S]-[ferredoxin] = oxidized [plastocyanin] + reduced [2Fe-2S]-[ferredoxin]. Functionally, apoprotein for the two 4Fe-4S centers FA and FB of photosystem I (PSI); essential for photochemical activity. FB is the terminal electron acceptor of PSI, donating electrons to ferredoxin. The C-terminus interacts with PsaA/B/D and helps assemble the protein into the PSI complex. Required for binding of PsaD and PsaE to PSI. PSI is a plastocyanin/cytochrome c6-ferredoxin oxidoreductase, converting photonic excitation into a charge separation, which transfers an electron from the donor P700 chlorophyll pair to the spectroscopically characterized acceptors A0, A1, FX, FA and FB in turn. The chain is Photosystem I iron-sulfur center from Pyropia yezoensis (Susabi-nori).